The following is a 342-amino-acid chain: MATH domain and coiled-coil domain-containing protein At3g44800 (342 aa).

The 127-residue stretch at tyrosine 3–valine 129 folds into the MATH domain. The stretch at lysine 253–valine 327 forms a coiled coil.

The polypeptide is MATH domain and coiled-coil domain-containing protein At3g44800 (Arabidopsis thaliana (Mouse-ear cress)).